The sequence spans 792 residues: Terminal nucleotidyltransferase 4A (792 aa).

The tract at residues 55 to 191 (GAAGRGSGGL…QFHPGRRKRE (137 aa)) is disordered. Composition is skewed to low complexity over residues 80-97 (APAA…PAAE) and 105-139 (SPSL…ASLG). 2 residues coordinate Mg(2+): Asp297 and Asp299. ATP is bound by residues Gly360, Lys385, Ser403, and Tyr404. One can recognise a PAP-associated domain in the interval 428 to 486 (NLGMLLVEFFELYGRNFNYLKTGIRIKEGGAYIAKEEIMKAMTSGYRPSMLCIEDPLLP). Residues Asn488 and Arg492 each contribute to the ATP site. A compositionally biased stretch (low complexity) spans 601-619 (QLLSSGSSASSVSSLSGSD). 2 disordered regions span residues 601 to 632 (QLLS…TPSV) and 737 to 792 (MKGS…SLSR). Gly residues predominate over residues 744–756 (TQGGGYSSVGSGG). The span at 764 to 781 (RGHHQYNRTGWRRKKHTH) shows a compositional bias: basic residues.

Belongs to the DNA polymerase type-B-like family. As to quaternary structure, component of a nuclear TRAMP-like complex, an ATP-dependent exosome regulatory complex consisting of a helicase (MTREX), an oligadenylate polymerase (TENT4B or TENT4A), and a substrate specific RNA-binding factor (ZCCHC7 or ZCCHC8). Several TRAMP-like complexes exist with specific compositions and are associated with nuclear, or nucleolar RNA exosomes. The cofactor is Mg(2+). It depends on Mn(2+) as a cofactor.

It localises to the cytoplasm. The protein resides in the nucleus. The protein localises to the nucleoplasm. It catalyses the reaction RNA(n) + ATP = RNA(n)-3'-adenine ribonucleotide + diphosphate. Functionally, terminal nucleotidyltransferase that catalyzes preferentially the transfer of ATP and GTP on RNA 3' poly(A) tail creating a heterogeneous 3' poly(A) tail leading to mRNAs stabilization by protecting mRNAs from active deadenylation. Also functions as a catalytic subunit of a TRAMP-like complex which has a poly(A) RNA polymerase activity and is involved in a post-transcriptional quality control mechanism. Polyadenylation with short oligo(A) tails is required for the degradative activity of the exosome on several of its nuclear RNA substrates. Has no terminal uridylyltransferase activity, and does not play a role in replication-dependent histone mRNA degradation via uridylation. This is Terminal nucleotidyltransferase 4A from Homo sapiens (Human).